The sequence spans 1024 residues: MSYAELFCQSNFSFLTGASHAEELVLQAAFYRYHAIAITDECSVAGVVKAHATIEQHKLDIKQIVGSMFWLNEECQIVLLCPCRKAYAEMCRIITNARRRSEKGSYQLSEWDLMSIRHCLVLWLPTHQASDHYWGRWLNQHHNNRLWVAIQRHLGGDDDAYTNHCEKLAHELQQPITACGGVLMHTAERLPLQHILTAIKHGCSVDQLGFERLSNAERALRPLNKLVRIYKPEWLEESKYIADLCEFKLSDLKYEYPTELIPNGYTPNSYLRMLVEQGKERRFPEGVPEDINQTIENELRLIEDLKYHYYFLTIHDIVMFAKQQGILYQGRGSAANSVVCYCLEITAVDPRQISVLFERFISKERKEPPDIDVDFEHERREEVIQYIYKKYGRERAALAATVISYRFKSAVREVGKALGIEETQLDFFIKNVNRRDRSQGWQAQIIELGLQPESLKGQQFIQLVNEIIGFPRHLSQHVGGFVISSGPLYELVPVENAAMEDRTIIQWDKDDLESLELLKVDVLALGMLNAIRKCFQLIEKHHQRSLSIAEITRRQDDPHVYRMLQKADTVGVFQIESRAQMSMLPRLKPACYYDLVIQIAIVRPGPIQGDMVHPFLKRRNGEEPVSYPSEAVKSVLERTMGVPIFQEQVIKLAMVAAGFSGGEADQLRRAMASWKKNGDLAKFKPKLLNGMQERGYDLAFAERIFEQICGFGEYGFPESHSASFAVLAYCSAWLKYYYPAEFYTALLNSQPMGFYSPSQLVQDARRHGVEVLPICVNHSYYQHHLIQRPNGRLGVQLGFRLVKGFNEEGATRLVERRPKTGYHSIQEVKQILRSRRDIELLASANAFQILSGNRYNARWAAMDSLSDLPLFHHIEEPSVGYQVQPSEYESLIEDYASTGLSLNRHPITLLEEAGILPRFTRMKQLVDKEHKSLVTVAGVVTGRQSPGTAAGVTFFTLEDDTGNINVVVWSATARAQKQAYLTSKILMVKGILEREGEVIHVIAGKLIDCTHYLSNLQSKSRDFH.

The protein belongs to the DNA polymerase type-C family. DnaE2 subfamily.

It localises to the cytoplasm. The enzyme catalyses DNA(n) + a 2'-deoxyribonucleoside 5'-triphosphate = DNA(n+1) + diphosphate. In terms of biological role, DNA polymerase involved in damage-induced mutagenesis and translesion synthesis (TLS). It is not the major replicative DNA polymerase. This chain is Error-prone DNA polymerase, found in Vibrio parahaemolyticus serotype O3:K6 (strain RIMD 2210633).